The following is a 522-amino-acid chain: TNF receptor-associated factor 6 (522 aa).

The interaction with TAX1BP1 stretch occupies residues 1 to 354 (MSLLNCENSC…EAQQCNGIYI (354 aa)). An RING-type; degenerate zinc finger spans residues 70–109 (CPICLMALREAVQTPCGHRFCKACIIKSIRDAGHKCPVDN). A Glycyl lysine isopeptide (Lys-Gly) (interchain with G-Cter in SUMO); alternate cross-link involves residue K124. K124 is covalently cross-linked (Glycyl lysine isopeptide (Lys-Gly) (interchain with G-Cter in ubiquitin); alternate). A Glycyl lysine isopeptide (Lys-Gly) (interchain with G-Cter in SUMO) cross-link involves residue K142. TRAF-type zinc fingers lie at residues 150 to 202 (DHQA…EDKE) and 203 to 259 (IHDQ…NHLA). The stretch at 288-348 (YVSEVRNFQE…DKVAEIEAQQ (61 aa)) forms a coiled coil. K319 is covalently cross-linked (Glycyl lysine isopeptide (Lys-Gly) (interchain with G-Cter in ubiquitin)). The MATH domain maps to 350 to 499 (NGIYIWKIGN…DDTLLVRCEV (150 aa)). The tract at residues 355 to 522 (WKIGNFGMHL…FQPRSTDSGV (168 aa)) is interaction with TANK. A Glycyl lysine isopeptide (Lys-Gly) (interchain with G-Cter in SUMO) cross-link involves residue K453.

This sequence belongs to the TNF receptor-associated factor family. A subfamily. Homotrimer. Homooligomer. N-terminal region is dimeric while C-terminal region is trimeric; maybe providing a mode of oligomerization. Upon IL1B treatment, forms a complex with PELI1, IRAK1, IRAK4 and MYD88; this complex recruits MAP3K7/TAK1, TAB1 and TAB2 to mediate NF-kappa-B activation. Direct binding of SMAD6 to PELI1 prevents the complex formation and hence negatively regulates IL1R-TLR signaling and eventually NF-kappa-B-mediated gene expression. Binds to TNFRSF5/CD40 and TNFRSF11A/RANK. Associates with NGFR, TNFRSF17, IRAK2, IRAK3, RIPK2, MAP3K1, MAP3K5, MAP3K14, CSK, TRAF, TRAF-interacting protein TRIP and TNF receptor associated protein TDP2. Interacts with IL17R. Interacts with SQSTM1 bridging NTRK1 and NGFR. Forms a ternary complex with SQSTM1 and PRKCZ. Interacts with PELI2 and PELI3. Binds UBE2V1. Interacts with TAX1BP1; this interaction mediates deubiquitination of TRAF6 and inhibition of NF-kappa-B activation. Interacts with ZNF675. Interacts with ARRB1 and ARRB2. Interacts with MAP3K7 and TAB1/MAP3K7IP1; during IL-1 signaling. Interacts with UBE2N. Interacts with TGFBR1, HDAC1 and RANGAP1. Interacts with AKT1, AKT2 and AKT3. Interacts (via TRAF domains) with NUMBL (via C-terminal). Interacts with RBCK1. Interacts with LIMD1 (via LIM domains). Interacts with RSAD2/viperin. Interacts (via C-terminus) with EIF2AK2/PKR (via the kinase catalytic domain). Interacts with ZFAND5. Interacts with IL1RL1. Interacts with TRAFD1. Interacts with AJUBA. Interacts with MAVS/IPS1. Interacts (via TRAF domains) with DYNC2I2 (via WD domains). Interacts with IFIT3 (via N-terminus). Interacts with TICAM2. Interacts with CARD14. Interacts with CD40 and MAP3K8; the interaction is required for ERK activation. Interacts with TICAM1 and this interaction is enhanced in the presence of WDFY1. Interacts with TANK; this interaction increases in response to DNA damage. Interacts with USP10; this interaction increases in response to DNA damage. Interacts with ZC3H12A; this interaction increases in response to DNA damage and is stimulated by TANK. Interacts with WDFY3. Interacts with TRIM13. Interacts with GPS2. Interacts (via C-terminus) with SASH1. Interacts with LRRC19. Interacts with IL17RA and TRAF3IP2. Interacts with TOMM70. Interacts with AMBRA1; interaction is required to mediate 'Lys-63'-linked ubiquitination of ULK1. Interacts with CRBN; this interaction inhibits TLR4-mediated signaling by preventing TRAF6-mediated ubiquitination of ECSIT. In terms of processing, sumoylated on Lys-124, Lys-142 and Lys-453 with SUMO1. Post-translationally, polyubiquitinated on Lys-124 by TRAF3IP2; after cell stimulation with IL17A. Polyubiquitinated on Lys-124; after cell stimulation with IL1B or TGFB. This ligand-induced cell stimulation leads to dimerization/oligomerization of TRAF6 molecules, followed by auto-ubiquitination which involves UBE2N and UBE2V1 and leads to TRAF6 activation. This 'Lys-63' site-specific poly-ubiquitination appears to be associated with the activation of signaling molecules. Deubiquitinated by USP10 in a TANK-dependent manner, leading to the negative regulation of NF-kappa-B signaling upon DNA damage. LRRC19 induces 'Lys-63' ubiquitination. Ubiquitinated at Lys-319 by the SCF(FBXL2) complex, leading to its degradation by the proteasome.

It is found in the cytoplasm. Its subcellular location is the cell cortex. The protein resides in the nucleus. The protein localises to the lipid droplet. The enzyme catalyses S-ubiquitinyl-[E2 ubiquitin-conjugating enzyme]-L-cysteine + [acceptor protein]-L-lysine = [E2 ubiquitin-conjugating enzyme]-L-cysteine + N(6)-ubiquitinyl-[acceptor protein]-L-lysine.. The protein operates within protein modification; protein ubiquitination. Functionally, E3 ubiquitin ligase that, together with UBE2N and UBE2V1, mediates the synthesis of 'Lys-63'-linked-polyubiquitin chains conjugated to proteins, such as ECSIT, IKBKG, IRAK1, AKT1 and AKT2. Also mediates ubiquitination of free/unanchored polyubiquitin chain that leads to MAP3K7 activation. Leads to the activation of NF-kappa-B and JUN. Seems to also play a role in dendritic cells (DCs) maturation and/or activation. Represses c-Myb-mediated transactivation, in B-lymphocytes. Adapter protein that seems to play a role in signal transduction initiated via TNF receptor, IL-1 receptor and IL-17 receptor. Regulates osteoclast differentiation by mediating the activation of adapter protein complex 1 (AP-1) and NF-kappa-B, in response to RANK-L stimulation. Together with MAP3K8, mediates CD40 signals that activate ERK in B-cells and macrophages, and thus may play a role in the regulation of immunoglobulin production. Acts as a regulator of the JNK and NF-kappa-B signaling pathways by initiating assembly of heterotypic 'Lys-63'-/'Lys-48'-linked branched ubiquitin chains that are then recognized by TAB2: TRAF6 catalyzes initial 'Lys-63'-linked-polyubiquitin chains that are then branched via 'Lys-48'-linked polyubiquitin by HUWE1. 'Lys-63'-/'Lys-48'-linked branched ubiquitin chains protect 'Lys-63'-linkages from CYLD deubiquitination. Also participates in the TCR signaling by ubiquitinating LAT. The sequence is that of TNF receptor-associated factor 6 (TRAF6) from Cercocebus atys (Sooty mangabey).